Reading from the N-terminus, the 228-residue chain is Fluoride-specific ion channel FluC (228 aa).

The next 7 membrane-spanning stretches (helical) occupy residues 3–23 (LSLFAIALGGAAGALARFWVS), 37–57 (GTLFINVSGSFLMGFLSVMMI), 72–92 (VGFLGAYTTFSTFSLETLALF), 101–121 (ALNVLLSVVLCLAAVWVGAVL), 141–161 (IFGAACGMSLLAGFAAALAFA), 172–192 (LVLVALTGLVVVGTLVALVVT), and 202–222 (LWGAFTLSAFAAVVFLSLGLV). Residues glycine 76 and threonine 79 each contribute to the Na(+) site.

This sequence belongs to the fluoride channel Fluc/FEX (TC 1.A.43) family.

It is found in the cell inner membrane. It carries out the reaction fluoride(in) = fluoride(out). Its activity is regulated as follows. Na(+) is not transported, but it plays an essential structural role and its presence is essential for fluoride channel function. Functionally, fluoride-specific ion channel. Important for reducing fluoride concentration in the cell, thus reducing its toxicity. The polypeptide is Fluoride-specific ion channel FluC (Methylococcus capsulatus (strain ATCC 33009 / NCIMB 11132 / Bath)).